Here is a 180-residue protein sequence, read N- to C-terminus: Large ribosomal subunit protein uL5 (180 aa).

Belongs to the universal ribosomal protein uL5 family. As to quaternary structure, part of the 50S ribosomal subunit; part of the 5S rRNA/L5/L18/L25 subcomplex. Contacts the 5S rRNA and the P site tRNA. Forms a bridge to the 30S subunit in the 70S ribosome.

Functionally, this is one of the proteins that bind and probably mediate the attachment of the 5S RNA into the large ribosomal subunit, where it forms part of the central protuberance. In the 70S ribosome it contacts protein S13 of the 30S subunit (bridge B1b), connecting the 2 subunits; this bridge is implicated in subunit movement. Contacts the P site tRNA; the 5S rRNA and some of its associated proteins might help stabilize positioning of ribosome-bound tRNAs. The protein is Large ribosomal subunit protein uL5 of Spiroplasma kunkelii.